Reading from the N-terminus, the 307-residue chain is Cyclin-dependent kinase 5 activator 1 (307 aa).

G2 carries N-myristoyl glycine lipidation. S8 carries the post-translational modification Phosphoserine; by CDK5. Residues 97-133 (TFAQPPPAQPPAPPASQLSGSQTGVSSSVKKAPHPAI) form a disordered region. The segment covering 100–110 (QPPPAQPPAPP) has biased composition (pro residues). A compositionally biased stretch (polar residues) spans 112-125 (SQLSGSQTGVSSSV). T138 is modified (phosphothreonine; by CDK5).

This sequence belongs to the cyclin-dependent kinase 5 activator family. In terms of assembly, heterodimer composed of a catalytic subunit CDK5 and a regulatory subunit CDK5R1 (p25) and macromolecular complex composed of at least CDK5, CDK5R1 (p35) and CDK5RAP1 or CDK5RAP2 or CDK5RAP3. Only the heterodimer shows kinase activity. Interacts with EPHA4 and NGEF; may mediate the activation of NGEF by EPHA4. Interacts with RASGRF2. The complex p35/CDK5 interacts with CLOCK. Post-translationally, the p35 form is proteolytically cleaved by calpain, giving rise to the p25 form. P35 has a 5 to 10 fold shorter half-life compared to p25. The conversion results in deregulation of the CDK5 kinase: p25/CDK5 kinase displays an increased and altered tau phosphorylation in comparison to the p35/CDK5 kinase in vivo. In terms of processing, myristoylated. A proper myristoylation signal is essential for the proper distribution of p35. Phosphorylation at Ser-8 and Thr-138 by CDK5 prevents calpain-mediated proteolysis. Post-translationally, ubiquitinated, leading to its degradation: degradation of p35 by proteasome results in down-regulation of CDK5 activity. During this process, CDK5 phosphorylates p35 and induces its ubiquitination and subsequent degradation. Ubiquitinated by the CRL2(FEM1B) complex, which recognizes the -Gly-Leu-Asp-Arg C-degron at the C-terminus, leading to its degradation. In terms of tissue distribution, brain and neuron specific.

The protein resides in the cell membrane. It is found in the cell projection. The protein localises to the neuron projection. Its subcellular location is the nucleus. It localises to the cytoplasm. The protein resides in the perinuclear region. It is found in the perikaryon. In terms of biological role, p35 is a neuron specific activator of CDK5. The complex p35/CDK5 is required for neurite outgrowth and cortical lamination. Involved in dendritic spine morphogenesis by mediating the EFNA1-EPHA4 signaling. Activator of TPKII. The complex p35/CDK5 participates in the regulation of the circadian clock by modulating the function of CLOCK protein: phosphorylates CLOCK at 'Thr-451' and 'Thr-461' and regulates the transcriptional activity of the CLOCK-BMAL1 heterodimer in association with altered stability and subcellular distribution. The polypeptide is Cyclin-dependent kinase 5 activator 1 (Cdk5r1) (Rattus norvegicus (Rat)).